The sequence spans 503 residues: GMP synthase [glutamine-hydrolyzing] (503 aa).

The region spanning 3-189 (PVLVVDFGSQ…AFLSSFAAPN (187 aa)) is the Glutamine amidotransferase type-1 domain. Cysteine 80 serves as the catalytic Nucleophile. Catalysis depends on residues histidine 165 and glutamate 167. Residues 190-380 (WDPEQTICGT…LGIPKHIVHR (191 aa)) form the GMPS ATP-PPase domain. Position 217–223 (217–223 (SGGVDSV)) interacts with ATP.

In terms of assembly, homodimer.

It catalyses the reaction XMP + L-glutamine + ATP + H2O = GMP + L-glutamate + AMP + diphosphate + 2 H(+). Its pathway is purine metabolism; GMP biosynthesis; GMP from XMP (L-Gln route): step 1/1. In terms of biological role, catalyzes the synthesis of GMP from XMP. The protein is GMP synthase [glutamine-hydrolyzing] of Tropheryma whipplei (strain Twist) (Whipple's bacillus).